Consider the following 348-residue polypeptide: Dihydroorotase (348 aa).

Residues His-17 and His-19 each contribute to the Zn(2+) site. Substrate contacts are provided by residues 19–21 (HLR) and Asn-45. Zn(2+)-binding residues include Lys-103, His-140, and His-178. N6-carboxylysine is present on Lys-103. His-140 contacts substrate. Leu-223 contacts substrate. Asp-251 provides a ligand contact to Zn(2+). Residue Asp-251 is part of the active site. Substrate-binding residues include His-255 and Ala-267.

The protein belongs to the metallo-dependent hydrolases superfamily. DHOase family. Class II DHOase subfamily. As to quaternary structure, homodimer. Zn(2+) serves as cofactor.

The catalysed reaction is (S)-dihydroorotate + H2O = N-carbamoyl-L-aspartate + H(+). Its pathway is pyrimidine metabolism; UMP biosynthesis via de novo pathway; (S)-dihydroorotate from bicarbonate: step 3/3. Functionally, catalyzes the reversible cyclization of carbamoyl aspartate to dihydroorotate. The chain is Dihydroorotase from Escherichia coli O157:H7.